Consider the following 371-residue polypeptide: 4-hydroxyphenylpyruvate dioxygenase-like protein (371 aa).

2 VOC domains span residues 7–135 (RLCH…LLER) and 160–328 (RVDH…VFTK). Residues His163, His258, and Glu339 each contribute to the Fe cation site.

This sequence belongs to the 4HPPD family. Fe cation is required as a cofactor.

The protein localises to the mitochondrion. The catalysed reaction is 3-(4-hydroxyphenyl)pyruvate + O2 = (S)-4-hydroxymandelate + CO2. Functionally, iron-dependent dioxygenase that catalyzes the conversion of 4-hydroxyphenylpyruvate (4-HPPA) to 4-hydroxymandelate (4-HMA) in the mitochondria, one of the steps in the biosynthesis of coenzyme Q10 from tyrosine. This chain is 4-hydroxyphenylpyruvate dioxygenase-like protein, found in Homo sapiens (Human).